A 385-amino-acid chain; its full sequence is O-phospho-L-seryl-tRNA:Cys-tRNA synthase (385 aa).

Residues 89–90 (AR), N195, and 218–220 (SGH) each bind pyridoxal 5'-phosphate. K221 is modified (N6-(pyridoxal phosphate)lysine).

This sequence belongs to the SepCysS family. Homodimer. Interacts with SepRS. It depends on pyridoxal 5'-phosphate as a cofactor.

It carries out the reaction O-phospho-L-seryl-tRNA(Cys) + hydrogen sulfide + H(+) = L-cysteinyl-tRNA(Cys) + phosphate. Functionally, converts O-phospho-L-seryl-tRNA(Cys) (Sep-tRNA(Cys)) to L-cysteinyl-tRNA(Cys) (Cys-tRNA(Cys)). The sequence is that of O-phospho-L-seryl-tRNA:Cys-tRNA synthase from Methanococcus aeolicus (strain ATCC BAA-1280 / DSM 17508 / OCM 812 / Nankai-3).